Consider the following 337-residue polypeptide: Cobalt-precorrin-5B C(1)-methyltransferase (337 aa).

Belongs to the CbiD family.

It carries out the reaction Co-precorrin-5B + S-adenosyl-L-methionine = Co-precorrin-6A + S-adenosyl-L-homocysteine. Its pathway is cofactor biosynthesis; adenosylcobalamin biosynthesis; cob(II)yrinate a,c-diamide from sirohydrochlorin (anaerobic route): step 6/10. Catalyzes the methylation of C-1 in cobalt-precorrin-5B to form cobalt-precorrin-6A. The sequence is that of Cobalt-precorrin-5B C(1)-methyltransferase from Methanoculleus marisnigri (strain ATCC 35101 / DSM 1498 / JR1).